Consider the following 621-residue polypeptide: UvrABC system protein C (621 aa).

One can recognise a GIY-YIG domain in the interval 21-100 (AEPGVYLMRD…IKTYQPPYNV (80 aa)). Residues 210–245 (DELIRELKEKMAQAAQQENYEAAARYRDQIRGLEQL) form the UVR domain.

It belongs to the UvrC family. In terms of assembly, interacts with UvrB in an incision complex.

Its subcellular location is the cytoplasm. Its function is as follows. The UvrABC repair system catalyzes the recognition and processing of DNA lesions. UvrC both incises the 5' and 3' sides of the lesion. The N-terminal half is responsible for the 3' incision and the C-terminal half is responsible for the 5' incision. This chain is UvrABC system protein C, found in Synechococcus sp. (strain JA-3-3Ab) (Cyanobacteria bacterium Yellowstone A-Prime).